The primary structure comprises 447 residues: Argininosuccinate synthase (447 aa).

Residues 17 to 25 (AFSGGLDTS) and alanine 43 contribute to the ATP site. Tyrosine 99 is a binding site for L-citrulline. Glycine 129 and threonine 131 together coordinate ATP. Residues threonine 131, asparagine 135, and aspartate 136 each contribute to the L-aspartate site. An L-citrulline-binding site is contributed by asparagine 135. Aspartate 136 contributes to the ATP binding site. Residues arginine 139 and serine 192 each coordinate L-citrulline. Position 194 (aspartate 194) interacts with ATP. L-citrulline-binding residues include threonine 201, glutamate 203, and glutamate 280.

It belongs to the argininosuccinate synthase family. Type 2 subfamily. In terms of assembly, homotetramer.

It localises to the cytoplasm. It carries out the reaction L-citrulline + L-aspartate + ATP = 2-(N(omega)-L-arginino)succinate + AMP + diphosphate + H(+). It functions in the pathway amino-acid biosynthesis; L-arginine biosynthesis; L-arginine from L-ornithine and carbamoyl phosphate: step 2/3. This Salmonella dublin (strain CT_02021853) protein is Argininosuccinate synthase.